A 398-amino-acid chain; its full sequence is Acetate kinase (398 aa).

Position 7 (Asn7) interacts with Mg(2+). Lys14 provides a ligand contact to ATP. Residue Arg91 coordinates substrate. Catalysis depends on Asp148, which acts as the Proton donor/acceptor. ATP is bound by residues 208 to 212 (HIGNG), 283 to 285 (DLR), and 331 to 335 (GVGEN). Glu385 contacts Mg(2+).

Belongs to the acetokinase family. In terms of assembly, homodimer. Mg(2+) is required as a cofactor. The cofactor is Mn(2+).

The protein resides in the cytoplasm. The catalysed reaction is acetate + ATP = acetyl phosphate + ADP. Its pathway is metabolic intermediate biosynthesis; acetyl-CoA biosynthesis; acetyl-CoA from acetate: step 1/2. Its function is as follows. Catalyzes the formation of acetyl phosphate from acetate and ATP. Can also catalyze the reverse reaction. The sequence is that of Acetate kinase from Porphyromonas gingivalis (strain ATCC 33277 / DSM 20709 / CIP 103683 / JCM 12257 / NCTC 11834 / 2561).